The following is a 360-amino-acid chain: Serine/threonine-protein phosphatase 2A activator 2 (360 aa).

It belongs to the PTPA-type PPIase family.

The protein localises to the cytoplasm. It catalyses the reaction [protein]-peptidylproline (omega=180) = [protein]-peptidylproline (omega=0). Its function is as follows. PPIases accelerate the folding of proteins. It catalyzes the cis-trans isomerization of proline imidic peptide bonds in oligopeptides. Acts as a regulatory subunit for PP2A-like phosphatases modulating their activity or substrate specificity, probably by inducing a conformational change in the catalytic subunit, a direct target of the PPIase. Can reactivate inactive phosphatase PP2A-phosphatase methylesterase complexes (PP2Ai) in presence of ATP and Mg(2+) by dissociating the inactive form from the complex. The chain is Serine/threonine-protein phosphatase 2A activator 2 (RRD2) from Kluyveromyces lactis (strain ATCC 8585 / CBS 2359 / DSM 70799 / NBRC 1267 / NRRL Y-1140 / WM37) (Yeast).